A 592-amino-acid chain; its full sequence is Aspartate--tRNA ligase (592 aa).

Glu177 serves as a coordination point for L-aspartate. The aspartate stretch occupies residues 201–204 (QIFK). Arg223 contacts L-aspartate. ATP is bound by residues 223 to 225 (RDE) and Gln232. L-aspartate is bound at residue His451. Glu485 is an ATP binding site. Residue Arg492 coordinates L-aspartate. ATP is bound at residue 537–540 (GLDR).

The protein belongs to the class-II aminoacyl-tRNA synthetase family. Type 1 subfamily. In terms of assembly, homodimer.

The protein resides in the cytoplasm. The catalysed reaction is tRNA(Asp) + L-aspartate + ATP = L-aspartyl-tRNA(Asp) + AMP + diphosphate. Functionally, catalyzes the attachment of L-aspartate to tRNA(Asp) in a two-step reaction: L-aspartate is first activated by ATP to form Asp-AMP and then transferred to the acceptor end of tRNA(Asp). The polypeptide is Aspartate--tRNA ligase (Bacillus licheniformis (strain ATCC 14580 / DSM 13 / JCM 2505 / CCUG 7422 / NBRC 12200 / NCIMB 9375 / NCTC 10341 / NRRL NRS-1264 / Gibson 46)).